A 130-amino-acid polypeptide reads, in one-letter code: Small ribosomal subunit protein uS8 (130 aa).

The protein belongs to the universal ribosomal protein uS8 family. In terms of assembly, part of the 30S ribosomal subunit.

Functionally, one of the primary rRNA binding proteins, it binds directly to 16S rRNA central domain where it helps coordinate assembly of the platform of the 30S subunit. The protein is Small ribosomal subunit protein uS8 of Methanococcus aeolicus (strain ATCC BAA-1280 / DSM 17508 / OCM 812 / Nankai-3).